The sequence spans 88 residues: UPF0250 protein Shewmr4_0986 (88 aa).

It belongs to the UPF0250 family.

The sequence is that of UPF0250 protein Shewmr4_0986 from Shewanella sp. (strain MR-4).